The chain runs to 199 residues: NAD(P)H dehydrogenase (quinone) (199 aa).

In terms of domain architecture, Flavodoxin-like spans 4 to 190; sequence VLVLYYSAYG…AGARYQGQVI (187 aa). Residues 10–15 and 78–80 each bind FMN; these read SAYGHI and TRF. Tyr-12 serves as a coordination point for NAD(+). A substrate-binding site is contributed by Trp-98. FMN is bound by residues 113–119 and His-134; that span reads STATQHG.

This sequence belongs to the WrbA family. FMN is required as a cofactor.

It catalyses the reaction a quinone + NADH + H(+) = a quinol + NAD(+). The catalysed reaction is a quinone + NADPH + H(+) = a quinol + NADP(+). The protein is NAD(P)H dehydrogenase (quinone) of Rhodopseudomonas palustris (strain BisA53).